A 104-amino-acid chain; its full sequence is Protein RnfH (104 aa).

This sequence belongs to the UPF0125 (RnfH) family.

This Pseudomonas savastanoi pv. phaseolicola (strain 1448A / Race 6) (Pseudomonas syringae pv. phaseolicola (strain 1448A / Race 6)) protein is Protein RnfH.